The following is a 138-amino-acid chain: Membrane protein P8A7 (138 aa).

The next 4 helical transmembrane spans lie at isoleucine 12–valine 30, glycine 32–leucine 56, tyrosine 71–glycine 90, and glycine 93–cysteine 118.

The protein localises to the membrane. This chain is Membrane protein P8A7 (pmpA), found in Dictyostelium discoideum (Social amoeba).